Consider the following 874-residue polypeptide: Coatomer subunit gamma-1 (874 aa).

A compositionally biased stretch (basic and acidic residues) spans M1–E11. Positions M1–H21 are disordered. HEAT repeat units follow at residues T64–D101, K283–S320, V322–S355, and S356–R392. T594 is subject to Phosphothreonine. Residues R609–G874 form an interaction with ZNF289/ARFGAP2 region.

It belongs to the COPG family. Oligomeric complex that consists of at least the alpha, beta, beta', gamma, delta, epsilon and zeta subunits. Interacts with ZNF289/ARFGAP2 through its C-terminal appendage domain. Interacts with EGFR upon EGF treatment; interaction is essential for regulation of EGF-dependent nuclear transport of EGFR by retrograde trafficking from the Golgi to the ER. The coatomer interacts with KDEL receptors; the interaction is important for retrograde trafficking of KDEL-bearing proteins from the Golgi to the endoplasmic reticulum. Interacts with COPB1. Interacts with TMED10 (via C-terminus). Interacts with TMED2, TMED3, TMED7 and TMED9.

The protein resides in the cytoplasm. The protein localises to the golgi apparatus membrane. Its subcellular location is the cytoplasmic vesicle. It is found in the COPI-coated vesicle membrane. In terms of biological role, the coatomer is a cytosolic protein complex that binds to dilysine motifs and reversibly associates with Golgi non-clathrin-coated vesicles, which further mediate biosynthetic protein transport from the ER, via the Golgi up to the trans Golgi network. Coatomer complex is required for budding from Golgi membranes, and is essential for the retrograde Golgi-to-ER transport of dilysine-tagged proteins. In mammals, the coatomer can only be recruited by membranes associated to ADP-ribosylation factors (ARFs), which are small GTP-binding proteins; the complex also influences the Golgi structural integrity, as well as the processing, activity, and endocytic recycling of LDL receptors. Required for limiting lipid storage in lipid droplets. Involved in lipid homeostasis by regulating the presence of perilipin family members PLIN2 and PLIN3 at the lipid droplet surface and promoting the association of adipocyte triglyceride lipase (PNPLA2) with the lipid droplet surface to mediate lipolysis. The sequence is that of Coatomer subunit gamma-1 (COPG1) from Homo sapiens (Human).